The sequence spans 348 residues: Aldose 1-epimerase (348 aa).

A substrate-binding site is contributed by arginine 80. The active-site Proton donor is histidine 180. A substrate-binding site is contributed by aspartate 243. The active-site Proton acceptor is the glutamate 311.

It belongs to the aldose epimerase family.

The enzyme catalyses alpha-D-glucose = beta-D-glucose. Its pathway is carbohydrate metabolism; hexose metabolism. In terms of biological role, mutarotase converts alpha-aldose to the beta-anomer. It is active on D-glucose, L-arabinose, D-xylose, D-galactose, maltose and lactose. This Streptococcus thermophilus protein is Aldose 1-epimerase (galM).